The sequence spans 437 residues: Replication factor C large subunit (437 aa).

ATP is bound at residue 48–55 (GPPGVGKT). The segment at 410–437 (TQASKPTSEEKAEKSKKYYPKRSSSRKT) is disordered. A compositionally biased stretch (basic and acidic residues) spans 416–425 (TSEEKAEKSK). The segment covering 426–437 (KYYPKRSSSRKT) has biased composition (basic residues).

It belongs to the activator 1 small subunits family. RfcL subfamily. As to quaternary structure, heteromultimer composed of small subunits (RfcS) and large subunits (RfcL).

Its function is as follows. Part of the RFC clamp loader complex which loads the PCNA sliding clamp onto DNA. The sequence is that of Replication factor C large subunit from Sulfolobus acidocaldarius (strain ATCC 33909 / DSM 639 / JCM 8929 / NBRC 15157 / NCIMB 11770).